A 640-amino-acid polypeptide reads, in one-letter code: uncharacterized protein (640 aa).

Residues 594 to 614 are disordered; the sequence is QCSSDHCKPGSSETLPEATNE.

This is an uncharacterized protein from Rattus norvegicus (Rat).